Consider the following 190-residue polypeptide: Membrane protein FAM174A (190 aa).

The first 29 residues, 1–29 (MPTRRGCSGPCHFLASAFVLLLLPALNQS), serve as a signal peptide directing secretion. N-linked (GlcNAc...) asparagine glycosylation is found at N27 and N83. The Extracellular segment spans residues 30–123 (VVLPSTVPRA…NPSDKPMTQR (94 aa)). Residues 37 to 119 (PRAVQESKPL…AVSPNPSDKP (83 aa)) form a disordered region. Residues 124–144 (ALTVLVVVSAAVLVYFVVRTV) traverse the membrane as a helical segment. Over 145–190 (RMRRRNRKTRRYGVLDTNIENMELTPLEQDDEDDDNTLFDANHPRR) the chain is Cytoplasmic. Residues 168–190 (LTPLEQDDEDDDNTLFDANHPRR) form a disordered region. Over residues 172–181 (EQDDEDDDNT) the composition is skewed to acidic residues.

The protein belongs to the FAM174 family.

The protein localises to the membrane. This Rattus norvegicus (Rat) protein is Membrane protein FAM174A (Fam174a).